Reading from the N-terminus, the 213-residue chain is Protein PAE0745 (213 aa).

The region spanning 8–201 (EEGTFLVRLA…EKSPGGEVYE (194 aa)) is the AMMECR1 domain.

In Pyrobaculum aerophilum (strain ATCC 51768 / DSM 7523 / JCM 9630 / CIP 104966 / NBRC 100827 / IM2), this protein is Protein PAE0745.